The chain runs to 229 residues: Large ribosomal subunit protein uL1 (229 aa).

Belongs to the universal ribosomal protein uL1 family. In terms of assembly, part of the 50S ribosomal subunit.

Binds directly to 23S rRNA. The L1 stalk is quite mobile in the ribosome, and is involved in E site tRNA release. In terms of biological role, protein L1 is also a translational repressor protein, it controls the translation of the L11 operon by binding to its mRNA. The polypeptide is Large ribosomal subunit protein uL1 (Histophilus somni (strain 129Pt) (Haemophilus somnus)).